The chain runs to 239 residues: UPF0502 protein Bcen_5249 (239 aa).

The disordered stretch occupies residues 196–239 (IRGAKGRTEAPRGRSGATQCAGSTDGERTRHRRRRTGRRVLIAS). The segment covering 224–233 (TRHRRRRTGR) has biased composition (basic residues).

It belongs to the UPF0502 family.

The polypeptide is UPF0502 protein Bcen_5249 (Burkholderia orbicola (strain AU 1054)).